Here is a 380-residue protein sequence, read N- to C-terminus: Erythronate-4-phosphate dehydrogenase (380 aa).

Substrate-binding residues include S45 and T66. NAD(+) is bound by residues 126–127, D146, T175, 206–208, and D232; these read QV and ASR. The active site involves R208. Residue E237 is part of the active site. The active-site Proton donor is the H254. Position 257 (G257) interacts with NAD(+). Y258 contributes to the substrate binding site.

It belongs to the D-isomer specific 2-hydroxyacid dehydrogenase family. PdxB subfamily. As to quaternary structure, homodimer.

It is found in the cytoplasm. It carries out the reaction 4-phospho-D-erythronate + NAD(+) = (R)-3-hydroxy-2-oxo-4-phosphooxybutanoate + NADH + H(+). Its pathway is cofactor biosynthesis; pyridoxine 5'-phosphate biosynthesis; pyridoxine 5'-phosphate from D-erythrose 4-phosphate: step 2/5. Catalyzes the oxidation of erythronate-4-phosphate to 3-hydroxy-2-oxo-4-phosphonooxybutanoate. The protein is Erythronate-4-phosphate dehydrogenase of Pseudomonas paraeruginosa (strain DSM 24068 / PA7) (Pseudomonas aeruginosa (strain PA7)).